The chain runs to 524 residues: Apoptosis inhibitor 5-A (524 aa).

An ARM-like and Heat-like helical repeats region spans residues 1–360 (MATVEELYRS…HQLGRKLPDF (360 aa)). A disordered region spans residues 440 to 524 (TLSWKPVQRT…RGNRSRGRIY (85 aa)). The Nuclear localization signal signature appears at 455–476 (KRTSDETSSTSPPKKPIVGPKR). Gly residues predominate over residues 503–516 (GFQGGRGRGWGGRG).

It belongs to the API5 family. Monomer.

The protein localises to the nucleus. May be an antiapoptotic factor. This is Apoptosis inhibitor 5-A (api5-a) from Xenopus laevis (African clawed frog).